Consider the following 38-residue polypeptide: Photosystem II reaction center protein L (38 aa).

Residues 17-37 (SLYWGLLLIFVLAVLFSSYIF) form a helical membrane-spanning segment.

It belongs to the PsbL family. As to quaternary structure, PSII is composed of 1 copy each of membrane proteins PsbA, PsbB, PsbC, PsbD, PsbE, PsbF, PsbH, PsbI, PsbJ, PsbK, PsbL, PsbM, PsbT, PsbX, PsbY, PsbZ, Psb30/Ycf12, at least 3 peripheral proteins of the oxygen-evolving complex and a large number of cofactors. It forms dimeric complexes.

It is found in the plastid. The protein resides in the chloroplast thylakoid membrane. One of the components of the core complex of photosystem II (PSII). PSII is a light-driven water:plastoquinone oxidoreductase that uses light energy to abstract electrons from H(2)O, generating O(2) and a proton gradient subsequently used for ATP formation. It consists of a core antenna complex that captures photons, and an electron transfer chain that converts photonic excitation into a charge separation. This subunit is found at the monomer-monomer interface and is required for correct PSII assembly and/or dimerization. The polypeptide is Photosystem II reaction center protein L (Tupiella akineta (Green alga)).